We begin with the raw amino-acid sequence, 333 residues long: Fructose-1,6-bisphosphatase class 1 (333 aa).

Mg(2+)-binding residues include glutamate 90, aspartate 112, leucine 114, and aspartate 115. Residues 115–118, asparagine 207, and lysine 273 each bind substrate; that span reads DGSS. Mg(2+) is bound at residue glutamate 279.

Belongs to the FBPase class 1 family. In terms of assembly, homotetramer. It depends on Mg(2+) as a cofactor.

Its subcellular location is the cytoplasm. It carries out the reaction beta-D-fructose 1,6-bisphosphate + H2O = beta-D-fructose 6-phosphate + phosphate. It functions in the pathway carbohydrate biosynthesis; gluconeogenesis. The sequence is that of Fructose-1,6-bisphosphatase class 1 from Azoarcus sp. (strain BH72).